Here is a 635-residue protein sequence, read N- to C-terminus: 1-deoxy-D-xylulose-5-phosphate synthase (635 aa).

Thiamine diphosphate is bound by residues H74 and G115–A117. D146 is a Mg(2+) binding site. Thiamine diphosphate is bound by residues G147–A148, N175, Y285, and E367. N175 provides a ligand contact to Mg(2+).

It belongs to the transketolase family. DXPS subfamily. In terms of assembly, homodimer. Mg(2+) serves as cofactor. Thiamine diphosphate is required as a cofactor.

It catalyses the reaction D-glyceraldehyde 3-phosphate + pyruvate + H(+) = 1-deoxy-D-xylulose 5-phosphate + CO2. It participates in metabolic intermediate biosynthesis; 1-deoxy-D-xylulose 5-phosphate biosynthesis; 1-deoxy-D-xylulose 5-phosphate from D-glyceraldehyde 3-phosphate and pyruvate: step 1/1. In terms of biological role, catalyzes the acyloin condensation reaction between C atoms 2 and 3 of pyruvate and glyceraldehyde 3-phosphate to yield 1-deoxy-D-xylulose-5-phosphate (DXP). The protein is 1-deoxy-D-xylulose-5-phosphate synthase of Anaeromyxobacter sp. (strain Fw109-5).